Consider the following 574-residue polypeptide: Zinc finger protein 394 (574 aa).

Ser12 is modified (phosphoserine). Lys40 participates in a covalent cross-link: Glycyl lysine isopeptide (Lys-Gly) (interchain with G-Cter in SUMO2). Positions 64–146 constitute an SCAN box domain; it reads RLHFRQLRYQ…AVVRALQRAL (83 aa). The 76-residue stretch at 155-230 folds into the KRAB domain; it reads VTFEDMAVSL…LQEAFQGKHP (76 aa). The interval 182–202 is disordered; sequence ESAQKDSGSTVPPSLESRVEN. Residues Lys203, Lys228, and Lys254 each participate in a glycyl lysine isopeptide (Lys-Gly) (interchain with G-Cter in SUMO2) cross-link. The disordered stretch occupies residues 231-284; the sequence is LFSKCGSTHEDRVEKQSGNPLPLKLENSAEAEGLNSISDVNKNGSIEGEDSKNN. The segment covering 265–274 has biased composition (polar residues); that stretch reads NSISDVNKNG. A Glycyl lysine isopeptide (Lys-Gly) (interchain with G-Cter in SUMO2) cross-link involves residue Lys282. 7 consecutive C2H2-type zinc fingers follow at residues 358–380, 386–408, 414–436, 442–463, 469–491, 497–519, and 525–547; these read YKCG…QRIH, YGCQ…QRTH, YTCL…QSTH, FKCE…QRLH, YKCE…HRIH, YGCS…QRIH, and YKCL…QRIH. A Glycyl lysine isopeptide (Lys-Gly) (interchain with G-Cter in SUMO2) cross-link involves residue Lys443.

Belongs to the krueppel C2H2-type zinc-finger protein family.

It is found in the nucleus. In terms of biological role, may be involved in transcriptional regulation. The protein is Zinc finger protein 394 (ZNF394) of Pongo abelii (Sumatran orangutan).